Consider the following 494-residue polypeptide: Ketol-acid reductoisomerase (NADP(+)) (494 aa).

Residues 14–208 (LDQLGRCRFM…GGHRAGVLES (195 aa)) form the KARI N-terminal Rossmann domain. Residues 45 to 48 (CGAQ), Arg68, Arg76, Ser78, and 108 to 110 (DKQ) each bind NADP(+). His132 is a catalytic residue. Residue Gly158 participates in NADP(+) binding. KARI C-terminal knotted domains are found at residues 209-344 (SFVA…NYPV) and 345-487 (TDVE…MTDM). Positions 217, 221, 389, and 393 each coordinate Mg(2+). Residue Ser414 coordinates substrate.

This sequence belongs to the ketol-acid reductoisomerase family. Mg(2+) serves as cofactor.

The catalysed reaction is (2R)-2,3-dihydroxy-3-methylbutanoate + NADP(+) = (2S)-2-acetolactate + NADPH + H(+). The enzyme catalyses (2R,3R)-2,3-dihydroxy-3-methylpentanoate + NADP(+) = (S)-2-ethyl-2-hydroxy-3-oxobutanoate + NADPH + H(+). The protein operates within amino-acid biosynthesis; L-isoleucine biosynthesis; L-isoleucine from 2-oxobutanoate: step 2/4. It functions in the pathway amino-acid biosynthesis; L-valine biosynthesis; L-valine from pyruvate: step 2/4. Involved in the biosynthesis of branched-chain amino acids (BCAA). Catalyzes an alkyl-migration followed by a ketol-acid reduction of (S)-2-acetolactate (S2AL) to yield (R)-2,3-dihydroxy-isovalerate. In the isomerase reaction, S2AL is rearranged via a Mg-dependent methyl migration to produce 3-hydroxy-3-methyl-2-ketobutyrate (HMKB). In the reductase reaction, this 2-ketoacid undergoes a metal-dependent reduction by NADPH to yield (R)-2,3-dihydroxy-isovalerate. This Photobacterium profundum (strain SS9) protein is Ketol-acid reductoisomerase (NADP(+)).